Reading from the N-terminus, the 30-residue chain is 80 kDa carcinoembryonic antigen-binding protein (30 aa).

In terms of assembly, binds to carcinoembryonic antigen (CEA). In terms of processing, the N-terminus is blocked.

It is found in the cell membrane. May play a role in the development of hepatic metastases from colorectal cancers. The chain is 80 kDa carcinoembryonic antigen-binding protein from Rattus norvegicus (Rat).